Reading from the N-terminus, the 64-residue chain is Large ribosomal subunit protein uL29 (64 aa).

Belongs to the universal ribosomal protein uL29 family.

The sequence is that of Large ribosomal subunit protein uL29 from Paraburkholderia phytofirmans (strain DSM 17436 / LMG 22146 / PsJN) (Burkholderia phytofirmans).